The following is a 242-amino-acid chain: Lysosomal membrane ascorbate-dependent ferrireductase CYB561A3 (242 aa).

Topologically, residues 1-7 (MVSGRFY) are cytoplasmic. Residues 8-28 (LSCLLLGSLGSMCILFTIYWM) traverse the membrane as a helical segment. The region spanning 12–219 (LLGSLGSMCI…FGLLVLYILL (208 aa)) is the Cytochrome b561 domain. The Lumenal portion of the chain corresponds to 29–45 (QYWRGGFAWNGSIYMFN). Residue Asn-38 is glycosylated (N-linked (GlcNAc...) asparagine). A helical transmembrane segment spans residues 46 to 66 (WHPVLMVAGMVVFYGGASLVY). Heme b contacts are provided by His-47 and Arg-67. Residues 67-83 (RLPQSWVGPKLPWKLLH) are Cytoplasmic-facing. Residues Lys-76 and Lys-80 each contribute to the L-ascorbate site. Heme b is bound at residue His-83. Residues 84-104 (AALHLMAFVLTVVGLVAVFTF) traverse the membrane as a helical segment. The Lumenal portion of the chain corresponds to 105 to 119 (HNHGRTANLYSLHSW). Residues 112–115 (NLYS) and His-117 each bind heme b. Residues 120–140 (LGITTVFLFACQWFLGFAVFL) traverse the membrane as a helical segment. Over 141–154 (LPWASMWLRSLLKP) the chain is Cytoplasmic. Arg-149 is a binding site for L-ascorbate. A helical transmembrane segment spans residues 155-175 (IHVFFGAAILSLSIASVISGI). Heme b-binding residues include His-156 and Glu-177. At 176-202 (NEKLFFSLKNTTRPYHSLPSEAVFANS) the chain is on the lumenal side. Residues 203-223 (TGMLVVAFGLLVLYILLASSW) traverse the membrane as a helical segment. Residue Lys-224 coordinates heme b. Over 224 to 242 (KRPEPGILTDRQPLLHDGE) the chain is Cytoplasmic.

In terms of assembly, homodimer. Heme b is required as a cofactor. In terms of processing, N-glycosylated.

Its subcellular location is the late endosome membrane. It localises to the lysosome membrane. The catalysed reaction is Fe(3+)(out) + L-ascorbate(in) = monodehydro-L-ascorbate radical(in) + Fe(2+)(out) + H(+). Functionally, transmembrane reductase that uses ascorbate as an electron donor in the cytoplasm and transfers electrons across membranes to reduce iron cations Fe(3+) into Fe(2+) in the lumen of the late endosome and lysosome. Reduced iron can then be extruded from the late endosome and lysosome to the cytoplasm by divalent metal-specific transporters. It is therefore most probably involved in endosomal and lysosomal cellular iron homeostasis. In Homo sapiens (Human), this protein is Lysosomal membrane ascorbate-dependent ferrireductase CYB561A3.